Reading from the N-terminus, the 316-residue chain is Acetylglutamate kinase (316 aa).

Substrate-binding positions include 76–77 (GG), arginine 98, and asparagine 207.

Belongs to the acetylglutamate kinase family. ArgB subfamily.

The protein localises to the cytoplasm. It catalyses the reaction N-acetyl-L-glutamate + ATP = N-acetyl-L-glutamyl 5-phosphate + ADP. Its pathway is amino-acid biosynthesis; L-arginine biosynthesis; N(2)-acetyl-L-ornithine from L-glutamate: step 2/4. Its function is as follows. Catalyzes the ATP-dependent phosphorylation of N-acetyl-L-glutamate. The chain is Acetylglutamate kinase from Paenarthrobacter aurescens (strain TC1).